A 194-amino-acid polypeptide reads, in one-letter code: Adenylate kinase (194 aa).

11-16 (GSGKGT) is an ATP binding site. The tract at residues 31–60 (STGELLRAEIKAQTELGQAAAGYINEGHLV) is NMP. Residues Thr-32, Arg-37, 58-60 (HLV), 86-89 (GFPR), and Gln-93 each bind AMP. Positions 127 to 137 (NRGKVSGRSDD) are LID. ATP is bound at residue Arg-128. Positions 134 and 145 each coordinate AMP. Gly-173 lines the ATP pocket.

This sequence belongs to the adenylate kinase family. As to quaternary structure, monomer.

The protein resides in the cytoplasm. It catalyses the reaction AMP + ATP = 2 ADP. Its pathway is purine metabolism; AMP biosynthesis via salvage pathway; AMP from ADP: step 1/1. In terms of biological role, catalyzes the reversible transfer of the terminal phosphate group between ATP and AMP. Plays an important role in cellular energy homeostasis and in adenine nucleotide metabolism. The protein is Adenylate kinase of Porphyromonas gingivalis (strain ATCC BAA-308 / W83).